The sequence spans 190 residues: Small ribosomal subunit protein eS7 (190 aa).

The protein belongs to the eukaryotic ribosomal protein eS7 family.

In Manduca sexta (Tobacco hawkmoth), this protein is Small ribosomal subunit protein eS7 (RpS7).